The primary structure comprises 469 residues: SHC-transforming protein 1 (469 aa).

Positions 1–26 are disordered; that stretch reads MNKLSGGGGRRTRVEGGQLGGEEWTR. At Ser29 the chain carries Phosphoserine. At Lys44 the chain carries N6-acetyllysine. The PID domain maps to 46-229; the sequence is MGPGVSYLVR…AGFDGSAWDE (184 aa). The tract at residues 230–373 is CH1; it reads EEEELPDHQY…SMAEQLQGES (144 aa). Tyr239, Tyr240, and Tyr313 each carry phosphotyrosine. The disordered stretch occupies residues 322–344; that stretch reads ARQAGGGAGPPNPSVNGSAPRDL. Phosphoserine is present on Ser339. The 92-residue stretch at 374–465 folds into the SH2 domain; the sequence is WFHGKLSRRE…GSELCLQQPV (92 aa).

As to quaternary structure, interacts with CPNE3; this interaction may mediate the binding of CPNE3 with ERBB2. Interacts with the NPXY motif of tyrosine-phosphorylated IGF1R and INSR in vitro via the PID domain. Once activated, binds to GRB2. Interacts with tyrosine-phosphorylated CD3T and DDR2. Interacts with the N-terminal region of APS. Interacts with phosphorylated LRP1 and IRS4. Interacts with INPP5D/SHIP1 and INPPL1/SHIP2. Interacts with ALK, GAB2, GRB7 and KIT. Interacts with PTPN6/SHP (tyrosine phosphorylated). Identified in a complex containing FGFR4, NCAM1, CDH2, PLCG1, FRS2A, SRC, SHC1, GAP43 and CTTN. Interacts with EPHB1 and GRB2; activates the MAPK/ERK cascade to regulate cell migration. Interacts with PDGFRB (tyrosine-phosphorylated). Interacts with ERBB4. Interacts with TEK/TIE2 (tyrosine-phosphorylated). Interacts with PTK2/FAK1. Interacts with FLT4 (tyrosine-phosphorylated). Interacts with the Trk receptors NTRK1, NTRK2 and NTRK3; in a phosphotyrosine-dependent manner. Interacts with CEACAM1; this interaction is CEACAM1-phosphorylation-dependent and mediates interaction with EGFR or INSR resulting in decrease coupling of SHC1 to the MAPK3/ERK1-MAPK1/ERK2 pathway. Interacts (via PID domain) with PEAK1 (when phosphorylated). Found in a complex with PPP1CA, PPP1CC, SHC1 and PEAK1. Post-translationally, phosphorylated by activated epidermal growth factor receptor. Phosphorylated in response to KIT signaling. Tyrosine phosphorylated in response to FLT3 signaling and by ligand-activated ALK. Tyrosine phosphorylated by TEK/TIE2. Tyrosine phosphorylated by ligand-activated PDGFRB. May be tyrosine phosphorylated by activated PTK2/FAK1. Dephosphorylation by PTPN2 may regulate interaction with GRB2. Phosphorylated in response to FLT4 signaling. Tyrosine phosphorylated by activated PTK2B/PYK2.

The protein localises to the cytoplasm. It localises to the cell junction. The protein resides in the focal adhesion. In terms of biological role, signaling adapter that couples activated growth factor receptors to signaling pathways. Participates in a signaling cascade initiated by activated KIT and KITLG/SCF. Participates in signaling downstream of the angiopoietin receptor TEK/TIE2, and plays a role in the regulation of endothelial cell migration and sprouting angiogenesis. This chain is SHC-transforming protein 1 (Shc1), found in Rattus norvegicus (Rat).